Consider the following 439-residue polypeptide: NAD-dependent malic enzyme 1 (439 aa).

The region spanning 9-84 (TLMIETPSVP…GIRLHTVSDE (76 aa)) is the ACT domain. Tyr112 (proton donor) is an active-site residue. The Proton acceptor role is filled by Lys167. The a divalent metal cation site is built by Glu209, Asp210, and Asp235. Residues 268 to 271 (LGAA), Asn347, and Asn373 each bind NAD(+).

The protein belongs to the malic enzymes family. It depends on Mg(2+) as a cofactor. Requires Mn(2+) as cofactor.

It carries out the reaction (S)-malate + NAD(+) = pyruvate + CO2 + NADH. It catalyses the reaction oxaloacetate + H(+) = pyruvate + CO2. In terms of biological role, catalyzes the decarboxylation of malate to pyruvate. Is specific for NAD, cannot use NADP. Can also catalyze the decarboxylation of oxaloacetate. Involved in keeping the ATP levels high. This is NAD-dependent malic enzyme 1 from Bacillus subtilis (strain 168).